The chain runs to 946 residues: Protein translocase subunit SecA (946 aa).

ATP contacts are provided by residues Gln90, 108 to 112 (GEGKT), and Asp509.

It belongs to the SecA family. In terms of assembly, monomer and homodimer. Part of the essential Sec protein translocation apparatus which comprises SecA, SecYEG and auxiliary proteins SecDF. Other proteins may also be involved.

Its subcellular location is the cell inner membrane. It localises to the cellular thylakoid membrane. It is found in the cytoplasm. The catalysed reaction is ATP + H2O + cellular proteinSide 1 = ADP + phosphate + cellular proteinSide 2.. In terms of biological role, part of the Sec protein translocase complex. Interacts with the SecYEG preprotein conducting channel. Has a central role in coupling the hydrolysis of ATP to the transfer of proteins into and across the cell membrane, serving as an ATP-driven molecular motor driving the stepwise translocation of polypeptide chains across the membrane. Functionally, probably participates in protein translocation into and across both the cytoplasmic and thylakoid membranes in cyanobacterial cells. The sequence is that of Protein translocase subunit SecA from Synechococcus sp. (strain RCC307).